Here is a 411-residue protein sequence, read N- to C-terminus: MKCDPSIAKLINNELSRQETHLELIASENFASKAVMEAQGSVLTNKYAEGLPNKRYYGGCEYVDGVEQLAIDRAKNLFGANWANVQPHSGAQANFAVFLSLLKPGDTIMGMDLSHGGHLTHGSPVNVSGKWFKTCHYEVDKKTEMLDMDAIRKKAIENQPKLIICGFSAYPRKIDFKAFRSIADEVNAYLLADIAHIAGLVASGLHPSPIPYCDVVTTTTHKTLRGPRGGLILSKDKEIGKKLDKAVFPGTQGGPLEHVIAAKAVAFKEASAPEFKIYSQKVISNAKVLSNQLQKRGISIVSKGTDNHIVLLDLRSIGMTGKVADQLVSDIKITANKNTVPFDPESPFVTSGLRLGSAALTTRGFNEQAFGDVGNVIADRLLNPNDEDIKEKSINKVSELCNKFPLYSENI.

Residues leucine 113 and 117–119 contribute to the (6S)-5,6,7,8-tetrahydrofolate site; that span reads GHL. Position 222 is an N6-(pyridoxal phosphate)lysine (lysine 222). Position 346-348 (346-348) interacts with (6S)-5,6,7,8-tetrahydrofolate; that stretch reads SPF.

Belongs to the SHMT family. Homodimer. Requires pyridoxal 5'-phosphate as cofactor.

Its subcellular location is the cytoplasm. It carries out the reaction (6R)-5,10-methylene-5,6,7,8-tetrahydrofolate + glycine + H2O = (6S)-5,6,7,8-tetrahydrofolate + L-serine. It participates in one-carbon metabolism; tetrahydrofolate interconversion. The protein operates within amino-acid biosynthesis; glycine biosynthesis; glycine from L-serine: step 1/1. Catalyzes the reversible interconversion of serine and glycine with tetrahydrofolate (THF) serving as the one-carbon carrier. This reaction serves as the major source of one-carbon groups required for the biosynthesis of purines, thymidylate, methionine, and other important biomolecules. Also exhibits THF-independent aldolase activity toward beta-hydroxyamino acids, producing glycine and aldehydes, via a retro-aldol mechanism. In Prochlorococcus marinus (strain NATL2A), this protein is Serine hydroxymethyltransferase.